Here is a 593-residue protein sequence, read N- to C-terminus: Aspartate--tRNA ligase (593 aa).

An L-aspartate-binding site is contributed by E173. An aspartate region spans residues 197-200 (QLFK). R219 lines the L-aspartate pocket. ATP is bound by residues 219 to 221 (RDE) and Q228. H449 provides a ligand contact to L-aspartate. E483 provides a ligand contact to ATP. Residue R490 coordinates L-aspartate. An ATP-binding site is contributed by 535–538 (GLDR).

The protein belongs to the class-II aminoacyl-tRNA synthetase family. Type 1 subfamily. As to quaternary structure, homodimer.

The protein resides in the cytoplasm. The enzyme catalyses tRNA(Asp) + L-aspartate + ATP = L-aspartyl-tRNA(Asp) + AMP + diphosphate. Catalyzes the attachment of L-aspartate to tRNA(Asp) in a two-step reaction: L-aspartate is first activated by ATP to form Asp-AMP and then transferred to the acceptor end of tRNA(Asp). The chain is Aspartate--tRNA ligase from Shewanella piezotolerans (strain WP3 / JCM 13877).